Here is a 164-residue protein sequence, read N- to C-terminus: Small ribosomal subunit protein uS9 (164 aa).

This sequence belongs to the universal ribosomal protein uS9 family.

This Rickettsia bellii (strain OSU 85-389) protein is Small ribosomal subunit protein uS9.